The following is a 330-amino-acid chain: Holliday junction branch migration complex subunit RuvB (330 aa).

The large ATPase domain (RuvB-L) stretch occupies residues 1 to 181 (MEDRLVGCRL…FGVINKLELY (181 aa)). Residues Leu-20, Arg-21, Gly-62, Lys-65, Thr-66, Thr-67, 128–130 (EDY), Arg-171, Tyr-181, and Arg-218 each bind ATP. A Mg(2+)-binding site is contributed by Thr-66. A small ATPAse domain (RuvB-S) region spans residues 182–252 (SVEELGQIVK…IARTGLEALE (71 aa)). Positions 255-330 (EIGLDAVDRN…AYEHFGLKYE (76 aa)) are head domain (RuvB-H). DNA is bound by residues Lys-310 and Arg-315.

Belongs to the RuvB family. Homohexamer. Forms an RuvA(8)-RuvB(12)-Holliday junction (HJ) complex. HJ DNA is sandwiched between 2 RuvA tetramers; dsDNA enters through RuvA and exits via RuvB. An RuvB hexamer assembles on each DNA strand where it exits the tetramer. Each RuvB hexamer is contacted by two RuvA subunits (via domain III) on 2 adjacent RuvB subunits; this complex drives branch migration. In the full resolvosome a probable DNA-RuvA(4)-RuvB(12)-RuvC(2) complex forms which resolves the HJ.

It is found in the cytoplasm. The enzyme catalyses ATP + H2O = ADP + phosphate + H(+). The RuvA-RuvB-RuvC complex processes Holliday junction (HJ) DNA during genetic recombination and DNA repair, while the RuvA-RuvB complex plays an important role in the rescue of blocked DNA replication forks via replication fork reversal (RFR). RuvA specifically binds to HJ cruciform DNA, conferring on it an open structure. The RuvB hexamer acts as an ATP-dependent pump, pulling dsDNA into and through the RuvAB complex. RuvB forms 2 homohexamers on either side of HJ DNA bound by 1 or 2 RuvA tetramers; 4 subunits per hexamer contact DNA at a time. Coordinated motions by a converter formed by DNA-disengaged RuvB subunits stimulates ATP hydrolysis and nucleotide exchange. Immobilization of the converter enables RuvB to convert the ATP-contained energy into a lever motion, pulling 2 nucleotides of DNA out of the RuvA tetramer per ATP hydrolyzed, thus driving DNA branch migration. The RuvB motors rotate together with the DNA substrate, which together with the progressing nucleotide cycle form the mechanistic basis for DNA recombination by continuous HJ branch migration. Branch migration allows RuvC to scan DNA until it finds its consensus sequence, where it cleaves and resolves cruciform DNA. This Acetivibrio thermocellus (strain ATCC 27405 / DSM 1237 / JCM 9322 / NBRC 103400 / NCIMB 10682 / NRRL B-4536 / VPI 7372) (Clostridium thermocellum) protein is Holliday junction branch migration complex subunit RuvB.